The following is a 560-amino-acid chain: Radial spoke head protein 3 homolog (560 aa).

Disordered stretches follow at residues 134–186 and 225–249; these read RKRG…EEPM and ARKR…PVEG. Residues 153–162 are compositionally biased toward polar residues; sequence RAPSTYTYTS. A coiled-coil region spans residues 215-239; sequence DSLELQRQREARKRALARKQAQEQL. Phosphothreonine; by MAPK1 is present on Thr286. Residues 331–385 adopt a coiled-coil conformation; that stretch reads LEVMEEEELANLRASQREYEELRNSERAEVQRLEEQERRHREEKERRKKQQWEIM. Disordered stretches follow at residues 354–375, 473–498, and 526–560; these read NSER…EEKE, HGED…ESLE, and DRRS…EELS.

This sequence belongs to the flagellar radial spoke RSP3 family. In terms of assembly, component of the axonemal radial spoke 1 (RS1) and 2 (RS2) complexes, at least composed of spoke head proteins RSPH1, RSPH3, RSPH9 and the cilia-specific component RSPH4A or sperm-specific component RSPH6A, spoke stalk proteins RSPH14, DNAJB13, DYDC1, ROPN1L and NME5, and the RS1 complex-specific anchor protein IQUB. Interacts with IQUB. Interacts with phosphorylated MAPK1. Interacts with MEK1. Interacts with PKA regulatory subunits PRKAR1A and PRKAR1B. Interacts with RSPH1. Interacts with RSPH4A. Interacts with RSPH6A. Interacts with RSPH9. Interacts with LRRC23.

It localises to the cytoplasm. It is found in the cytoskeleton. The protein localises to the cilium axoneme. The protein resides in the flagellum axoneme. Functions as part of axonemal radial spoke complexes that play an important part in the motility of sperm and cilia. Functions as a protein kinase A-anchoring protein that scaffolds the cAMP-dependent protein kinase holoenzyme. May serve as a point of convergence for MAPK and PKA signaling in cilia. This Homo sapiens (Human) protein is Radial spoke head protein 3 homolog (RSPH3).